A 1020-amino-acid polypeptide reads, in one-letter code: MLKIFEKIFGSKHEKDIQKIQPVINRINEIQEGLKGLGDDELKEKGKALKSRIRGVLMPIEDKKKELYRQLDNPELSLEEAESIHSSLDALAEEYEEKTASALEEALPETFALVKETCRRLKGLTYQVMGRDVVWDMVPYDVQLIGGIVLHSGKISEMATGEGKTLVSTLPTFLNALTGRGVHLVTVNDYLAQRDKEWMNPVFDFHNISVGVILNTMRPEERRQQYQCDVTYGTNNEFGFDYLRDNMAGTVEEMVQRDFYFAIVDEVDSVLIDEARTPLIISGPVPNSDNSQFQEIKPWIEQIVRAQQQLAASYLTEAEKALKESPQSPEAGLALLRVKRGQPKNTRFIKILSQQGMAKLIQVTENEYLRDNSSRMHEVDDELYFAVDEKAGTIDLTDKGREFLSKLSHQDRDLFLLPDVGTEVAAIDDDESVIAADKITRKDAVYRLFAERSERLHNISQLLKAYSLFLKDDEYVVQNGQVMIVDEFTGRILPGRRYSDGLHQAIEAKENVKIEGETQTMATVTIQNFFRLYEKLAGMTGTAETEASEFFEIYKLDVVAIPTNRPIVRKDMDDLVYKTRREKYNAIALKVEELQKKGQPVLVGTTSVEVSETLSRMLRARRIAHNVLNAKQNEREAEIVEGAGRPGAVTIATNMAGRGTDIKLGEGVREKGGLYILGSERHESRRIDRQLRGRAGRQGDPGESVFFVSLEDELMRLFGSDRVISVMDRLGHEEGDVIEHSMITKSIERAQKKVEEQNFAIRKRLLEYDDVLNQQREVIYTRRRDGLIKERLTTDILDLLRDYCDSVIDRHSKNLDTEGIEEQLLRELSIEFKPDRNNLEENATGVSEELYNSALAFYRRKEEAVPADIMRQIEKYAVLSVIDKQWRDHLREIDTLREGINLRAYGQKDPLLEYKQEAYNLFIQMLSEIELETLSLAFKLFPVNPDEVRAIEERQRQAAVRQEKLVTQHDDAASVYNASPGAENEAPLQRPVTADSKPGRNDPCPCGSGKKYKNCHGQQP.

Residues Q143, 161–165, and D661 each bind ATP; that span reads GEGKT. The interval 974–1020 is disordered; the sequence is SVYNASPGAENEAPLQRPVTADSKPGRNDPCPCGSGKKYKNCHGQQP. Zn(2+) is bound by residues C1004, C1006, C1015, and H1016.

The protein belongs to the SecA family. Monomer and homodimer. Part of the essential Sec protein translocation apparatus which comprises SecA, SecYEG and auxiliary proteins SecDF. Other proteins may also be involved. Zn(2+) serves as cofactor.

It is found in the cell inner membrane. It localises to the cytoplasm. The catalysed reaction is ATP + H2O + cellular proteinSide 1 = ADP + phosphate + cellular proteinSide 2.. In terms of biological role, part of the Sec protein translocase complex. Interacts with the SecYEG preprotein conducting channel. Has a central role in coupling the hydrolysis of ATP to the transfer of proteins into and across the cell membrane, serving as an ATP-driven molecular motor driving the stepwise translocation of polypeptide chains across the membrane. This is Protein translocase subunit SecA from Chlorobium phaeovibrioides (strain DSM 265 / 1930) (Prosthecochloris vibrioformis (strain DSM 265)).